The sequence spans 201 residues: MLREIRPAIVLLLVLTAITGLAYPLAMTGIAGMLFPAQAQGSLIEKDGKVIGSALIGQEFKDDKYFHGRPSATLAPDPNDSTKTVSAPYNAANSGGSNLGPTSKALADRLKEDVDKLKAENPNAAVPVDLVTTSASGLDPDISPEAAQFQVPRVAKARNMPEEAVKQLVASNVQGRLLGLLGEPRVNVLALNLALDRAAAK.

Residues 7-27 (PAIVLLLVLTAITGLAYPLAM) form a helical membrane-spanning segment.

It belongs to the KdpC family. The system is composed of three essential subunits: KdpA, KdpB and KdpC.

The protein localises to the cell inner membrane. Its function is as follows. Part of the high-affinity ATP-driven potassium transport (or Kdp) system, which catalyzes the hydrolysis of ATP coupled with the electrogenic transport of potassium into the cytoplasm. This subunit acts as a catalytic chaperone that increases the ATP-binding affinity of the ATP-hydrolyzing subunit KdpB by the formation of a transient KdpB/KdpC/ATP ternary complex. This Bradyrhizobium diazoefficiens (strain JCM 10833 / BCRC 13528 / IAM 13628 / NBRC 14792 / USDA 110) protein is Potassium-transporting ATPase KdpC subunit.